The chain runs to 317 residues: MSGRSPKALRAATANDRAQDRVRGLVIAAHGRHYIVAPEDGSAILQCFPRGKRSEIAVGDQVLYEPTSADQGVIVEIGERRNLLYRSDQYKSKLFAANLDQLLIVLATEPHFSEDLLGRALVAAEENELKPLIVLNKIDVEAALPLARKRLQLYRGLGYTVLEVSIKGQPDAARATLEAHLNGHSTLLLGQSGMGKSTLVNLLIPDAEVATREISTALNSGRHTTTFTRLYPLPGSEGALIDSPGFQEFGLHHLTEGKLERAFPEFRPLLAECRFYNCHHLHEPGCAILEAVADGRIAKERHALYAQLVHEASQIVR.

Residues 88–249 form the CP-type G domain; that stretch reads DQYKSKLFAA…LIDSPGFQEF (162 aa). GTP-binding positions include 136 to 139 and 190 to 198; these read NKID and GQSGMGKST. Zn(2+)-binding residues include cysteine 273, cysteine 278, histidine 280, and cysteine 286.

Belongs to the TRAFAC class YlqF/YawG GTPase family. RsgA subfamily. In terms of assembly, monomer. Associates with 30S ribosomal subunit, binds 16S rRNA. The cofactor is Zn(2+).

The protein resides in the cytoplasm. In terms of biological role, one of several proteins that assist in the late maturation steps of the functional core of the 30S ribosomal subunit. Helps release RbfA from mature subunits. May play a role in the assembly of ribosomal proteins into the subunit. Circularly permuted GTPase that catalyzes slow GTP hydrolysis, GTPase activity is stimulated by the 30S ribosomal subunit. This Paraburkholderia phymatum (strain DSM 17167 / CIP 108236 / LMG 21445 / STM815) (Burkholderia phymatum) protein is Small ribosomal subunit biogenesis GTPase RsgA.